The sequence spans 284 residues: Bifunctional protein FolD (284 aa).

Residues 166–168 (GAS), S191, and I232 each bind NADP(+).

Belongs to the tetrahydrofolate dehydrogenase/cyclohydrolase family. As to quaternary structure, homodimer.

The catalysed reaction is (6R)-5,10-methylene-5,6,7,8-tetrahydrofolate + NADP(+) = (6R)-5,10-methenyltetrahydrofolate + NADPH. The enzyme catalyses (6R)-5,10-methenyltetrahydrofolate + H2O = (6R)-10-formyltetrahydrofolate + H(+). It participates in one-carbon metabolism; tetrahydrofolate interconversion. In terms of biological role, catalyzes the oxidation of 5,10-methylenetetrahydrofolate to 5,10-methenyltetrahydrofolate and then the hydrolysis of 5,10-methenyltetrahydrofolate to 10-formyltetrahydrofolate. The protein is Bifunctional protein FolD of Thiobacillus denitrificans (strain ATCC 25259 / T1).